A 301-amino-acid polypeptide reads, in one-letter code: 2-dehydropantoate 2-reductase (301 aa).

Residues 11–16 (GAGAMG), Asn-107, and Ala-133 contribute to the NADP(+) site. Asn-107 contributes to the substrate binding site. Lys-187 (proton donor) is an active-site residue. Substrate is bound by residues Asn-191, Asn-195, Asn-205, and Ser-251. Residue Glu-263 participates in NADP(+) binding.

Belongs to the ketopantoate reductase family.

The protein localises to the cytoplasm. The catalysed reaction is (R)-pantoate + NADP(+) = 2-dehydropantoate + NADPH + H(+). The protein operates within cofactor biosynthesis; (R)-pantothenate biosynthesis; (R)-pantoate from 3-methyl-2-oxobutanoate: step 2/2. In terms of biological role, catalyzes the NADPH-dependent reduction of ketopantoate into pantoic acid. This chain is 2-dehydropantoate 2-reductase, found in Listeria innocua serovar 6a (strain ATCC BAA-680 / CLIP 11262).